Here is a 620-residue protein sequence, read N- to C-terminus: MRRDVRILLLGEAQVGKTSLILSLVGEEFPEEVPARAEEITIPADVTPEKVPTHIVDYSEAEQTEEELQEEIHKANVVCVVYDVSEETTIEKIRTKWIPLVNGRTATGPRLPIILVGNKSDLRPGSTMEAVLPIMSQFPEIETCVECSAKHLRNISELFYYAQKAVLHPTAPLYDPEAKQLRPACAQALTRIFRLSDQDRDHGLSDEELNAFQKSCFGHPLAPQALEDVKRVVCKNVSGGVQNDRLTLEGFLFLNTLFIQRGRHETTWTILRRFGYSDSLELTPDYLYPALHVPPGCSTELNHRGYQFVQRMFEKHDQDHDGVLSPTELQNLFSVFSGAPWGPELLHTVPTQAGCLPLHGYLCQWTLMTYLDVQQCLAHLGYLGYPTLCEQDSQAQAITVTREKKLDQEKGQTQRSVLMCKVLGARGVGKSAFLQAFLGNSLGEARDPPEKFPLHTINTVRVNGQEKYLILCEVNADSLLDTSLDTTCDVACLMFDSSDPKTFVHCATIYKRYYMDGQTPCLFIASKADLPEGVAPPGLSPAEFCRRHRLPAPASFSCLGPAMPSTDVFTQLATMATFPHLVHTELHPTSFWLRGVLVAVGTAVAAVLSFSLYRVLVKSR.

Over 1-594 (MRRDVRILLL…ELHPTSFWLR (594 aa)) the chain is Cytoplasmic. A Miro 1 domain is found at 2–168 (RRDVRILLLG…FYYAQKAVLH (167 aa)). GTP contacts are provided by Gly16, Lys17, Thr18, and Ser19. Thr18 provides a ligand contact to Mg(2+). Residue Asp57 coordinates Mg(2+). Ser59 contributes to the GTP binding site. Lys96 is covalently cross-linked (Glycyl lysine isopeptide (Lys-Gly) (interchain with G-Cter in ubiquitin)). Asn118, Lys119, Asp121, Ala149, and Lys150 together coordinate GTP. Lys119 is covalently cross-linked (Glycyl lysine isopeptide (Lys-Gly) (interchain with G-Cter in ubiquitin)). Residue Lys164 forms a Glycyl lysine isopeptide (Lys-Gly) (interchain with G-Cter in ubiquitin) linkage. EF-hand domains lie at 184 to 219 (ACAQ…CFGH) and 304 to 339 (RGYQ…FSGA). Ca(2+) is bound by residues Asp197, Asp199, Asp201, Glu208, Asp317, Asp319, Asp321, and Glu328. Positions 415-578 (RSVLMCKVLG…FTQLATMATF (164 aa)) constitute a Miro 2 domain. GTP-binding residues include Gly427, Gly429, Lys430, Ser431, and Ala432. Ser431 lines the Mg(2+) pocket. Residue Glu473 coordinates Mg(2+). Positions 527, 529, and 558 each coordinate GTP. The chain crosses the membrane as a helical; Anchor for type IV membrane protein span at residues 595 to 617 (GVLVAVGTAVAAVLSFSLYRVLV). Residues 618 to 620 (KSR) lie on the Mitochondrial intermembrane side of the membrane.

Belongs to the mitochondrial Rho GTPase family. Homodimer. Interacts with the kinesin-binding proteins TRAK1/OIP106 and TRAK2/GRIF1, forming a link between mitochondria and the trafficking apparatus of the microtubules. Interacts with ARMCX3. Found in a complex with KIF5B, OGT, RHOT1 and TRAK1. Ubiquitinated by PRKN in a PINK1-dependent manner, leading to its degradation. In terms of tissue distribution, ubiquitously expressed.

The protein localises to the mitochondrion outer membrane. The catalysed reaction is GTP + H2O = GDP + phosphate + H(+). The enzyme catalyses ATP + H2O = ADP + phosphate + H(+). It catalyses the reaction UTP + H2O = UDP + phosphate + H(+). In terms of biological role, atypical mitochondrial nucleoside-triphosphatase (NTPase) involved in mitochondrial trafficking. Probably involved in control of anterograde transport of mitochondria and their subcellular distribution. Can hydrolyze GTP, ATP and UTP. The sequence is that of Mitochondrial Rho GTPase 2 (Rhot2) from Mus musculus (Mouse).